Reading from the N-terminus, the 347-residue chain is Photosystem II assembly protein Ycf48 (347 aa).

Positions 1 to 38 are cleaved as a signal peptide; it reads MFAKQIDIHWQKMKGIKFLHWLLGTVLLWVSLSTPALA. Positions 202 to 226 match the Arg-rich patch motif; that stretch reads RGSFYSTWEPGQTAWEPHNRTTSRR.

It belongs to the Ycf48 family. In terms of assembly, interacts with the D1 protein (crystallized with PsbA1 or PsbA3), via the latter's C-terminal prepropeptide, may interact with parts of the mature D1 protein as well.

The protein resides in the cellular thylakoid lumen. Its function is as follows. A factor required for optimal assembly of photosystem II (PSII), acting in the early stages of PSII assembly. Also plays a role in replacement of photodamaged D1 (psbA). Assists YidC in synthesis of chlorophyll-binding proteins. This is Photosystem II assembly protein Ycf48 from Thermosynechococcus vestitus (strain NIES-2133 / IAM M-273 / BP-1).